We begin with the raw amino-acid sequence, 196 residues long: UPF0314 protein Oant_0840 (196 aa).

4 helical membrane passes run 15 to 35, 65 to 85, 127 to 147, and 151 to 171; these read WGLG…WLYF, WYTL…TVIA, FGDS…GFLI, and LPTK…LIVI.

Belongs to the UPF0314 family.

The protein resides in the cell membrane. The protein is UPF0314 protein Oant_0840 of Brucella anthropi (strain ATCC 49188 / DSM 6882 / CCUG 24695 / JCM 21032 / LMG 3331 / NBRC 15819 / NCTC 12168 / Alc 37) (Ochrobactrum anthropi).